A 364-amino-acid polypeptide reads, in one-letter code: UDP-3-O-acylglucosamine N-acyltransferase (364 aa).

Residue H258 is the Proton acceptor of the active site.

Belongs to the transferase hexapeptide repeat family. LpxD subfamily. Homotrimer.

It catalyses the reaction a UDP-3-O-[(3R)-3-hydroxyacyl]-alpha-D-glucosamine + a (3R)-hydroxyacyl-[ACP] = a UDP-2-N,3-O-bis[(3R)-3-hydroxyacyl]-alpha-D-glucosamine + holo-[ACP] + H(+). The protein operates within bacterial outer membrane biogenesis; LPS lipid A biosynthesis. Catalyzes the N-acylation of UDP-3-O-acylglucosamine using 3-hydroxyacyl-ACP as the acyl donor. Is involved in the biosynthesis of lipid A, a phosphorylated glycolipid that anchors the lipopolysaccharide to the outer membrane of the cell. In Burkholderia orbicola (strain AU 1054), this protein is UDP-3-O-acylglucosamine N-acyltransferase.